A 444-amino-acid chain; its full sequence is Glutamate-1-semialdehyde 2,1-aminomutase (444 aa).

An N6-(pyridoxal phosphate)lysine modification is found at K278.

This sequence belongs to the class-III pyridoxal-phosphate-dependent aminotransferase family. HemL subfamily. Homodimer. Pyridoxal 5'-phosphate is required as a cofactor.

It localises to the cytoplasm. The catalysed reaction is (S)-4-amino-5-oxopentanoate = 5-aminolevulinate. The protein operates within porphyrin-containing compound metabolism; protoporphyrin-IX biosynthesis; 5-aminolevulinate from L-glutamyl-tRNA(Glu): step 2/2. The polypeptide is Glutamate-1-semialdehyde 2,1-aminomutase (Deinococcus radiodurans (strain ATCC 13939 / DSM 20539 / JCM 16871 / CCUG 27074 / LMG 4051 / NBRC 15346 / NCIMB 9279 / VKM B-1422 / R1)).